Here is a 436-residue protein sequence, read N- to C-terminus: Protein disulfide-isomerase (436 aa).

The region spanning 216 to 365 (FLAGKIDPSI…VEDATESAKA (150 aa)) is the Thioredoxin domain. Active-site nucleophile residues include Cys266 and Cys269. A disulfide bridge connects residues Cys266 and Cys269. The interval 328-436 (TLVPHCRGSR…ASASSVKDEL (109 aa)) is disordered. Over residues 334 to 343 (RGSRPVHRRE) the composition is skewed to basic residues. Composition is skewed to low complexity over residues 362-377 (SAKA…AASA) and 385-436 (VKSG…KDEL). The Prevents secretion from ER motif lies at 433–436 (KDEL).

This sequence belongs to the protein disulfide isomerase family.

It is found in the endoplasmic reticulum lumen. It catalyses the reaction Catalyzes the rearrangement of -S-S- bonds in proteins.. In terms of biological role, participates in the folding of proteins containing disulfide bonds, may be involved in glycosylation, prolyl hydroxylation and triglyceride transfer. This is Protein disulfide-isomerase from Alternaria alternata (Alternaria rot fungus).